The sequence spans 278 residues: Shikimate dehydrogenase (NADP(+)) (278 aa).

Residues 19–21 (SLS) and Thr-66 contribute to the shikimate site. The active-site Proton acceptor is Lys-70. Asn-91 and Asp-106 together coordinate shikimate. NADP(+) contacts are provided by residues 130 to 134 (GAGGS), 152 to 157 (NRTVEK), and Leu-222. Shikimate is bound at residue Tyr-224. Gly-245 is an NADP(+) binding site.

This sequence belongs to the shikimate dehydrogenase family. As to quaternary structure, homodimer.

The catalysed reaction is shikimate + NADP(+) = 3-dehydroshikimate + NADPH + H(+). It participates in metabolic intermediate biosynthesis; chorismate biosynthesis; chorismate from D-erythrose 4-phosphate and phosphoenolpyruvate: step 4/7. Its function is as follows. Involved in the biosynthesis of the chorismate, which leads to the biosynthesis of aromatic amino acids. Catalyzes the reversible NADPH linked reduction of 3-dehydroshikimate (DHSA) to yield shikimate (SA). The sequence is that of Shikimate dehydrogenase (NADP(+)) from Methanococcus aeolicus (strain ATCC BAA-1280 / DSM 17508 / OCM 812 / Nankai-3).